Here is a 362-residue protein sequence, read N- to C-terminus: G-protein coupled receptor homolog US27 (362 aa).

The Virion surface segment spans residues 1 to 34 (MTTSTNNQTLTQVSNMTNHTLNSTEIYQLFEYTR). Residues Asn-7, Asn-15, Asn-18, and Asn-22 are each glycosylated (N-linked (GlcNAc...) asparagine; by host). A helical membrane pass occupies residues 35–58 (LGVWLMCIVGTFLNVLVITTILYY). Over 59-67 (RRKKKSPSD) the chain is Intravirion. Residues 68–90 (TYICNLAVADLLIVVGLPFFLEY) traverse the membrane as a helical segment. Residues 91–104 (AKHHPKLSREVVCS) are Virion surface-facing. The helical transmembrane segment at 105-126 (GLNACFYICLFAGVCFLINLSM) threads the bilayer. The Intravirion segment spans residues 127 to 148 (DRYCVIVWGVELNRVRNNKRAT). A helical transmembrane segment spans residues 149–167 (CWVVIFWILAVLMGMPHYL). Over 168-193 (MYSHTNNECVGEFANETSGWFPVFLN) the chain is Virion surface. The chain crosses the membrane as a helical span at residues 194–213 (TKVNICGYLAPIALMAYTYN). Residues 214-233 (RMVRFIINYVGKWHMQTLHV) are Intravirion-facing. The helical transmembrane segment at 234 to 257 (LLVVVVSFASFWFPFNLALFLESI) threads the bilayer. Over 258–274 (RLLAGVYNDTLQNVIIF) the chain is Virion surface. A helical transmembrane segment spans residues 275–298 (CLYVGQFLAYVRACLNPGIYILVG). Topologically, residues 299–362 (TQMRKDMWTT…MESGEEEFLL (64 aa)) are intravirion. Residues 341–362 (TKRTHYDRKNAPMESGEEEFLL) are disordered.

Belongs to the G-protein coupled receptor 1 family. Heterodimer with US28. Interacts with host Gi alpha-1 subunit GNAI1; this interaction does not lead to the catalytic activation of Gi complex.

It is found in the virion. The protein resides in the host cell membrane. Interacts with the host Gi complex without activating it, thereby probably interfering with the chemokine-Gi signaling. May also function as a G protein sink to sequester G protein from the cell surface via internalization. Plays an important role in spread of HCMV via the extracellular route. The protein is G-protein coupled receptor homolog US27 (US27) of Homo sapiens (Human).